We begin with the raw amino-acid sequence, 563 residues long: Beta-catenin-like protein 1 (563 aa).

Methionine 1 carries the post-translational modification N-acetylmethionine. Positions 1 to 49 (MDVGELLSYQPNRGTKRPRDDEEEELKMRRRQAGTRERGRYREEEMTVV) are disordered. A Nuclear localization signal motif is present at residues 16 to 33 (KRPRDDEEEELKMRRRQA). A compositionally biased stretch (basic and acidic residues) spans 34-45 (GTRERGRYREEE). 2 HEAT repeats span residues 79 to 129 (ESSV…VVAT) and 134 to 176 (YHLL…TLHE). N6-acetyllysine is present on lysine 91. A Nuclear export signal (NES) motif is present at residues 130 to 140 (MPDLYHLLVEL). ARM repeat units follow at residues 178–228 (EEGA…MAEF), 229–273 (RPEM…LQDN), 274–323 (DENR…CLML), 325–363 (SNRERFLKGEGLQLMNLMLREKKISRSSALKVLDHAMIG), and 364–417 (PEGT…LLRN). Residue serine 389 is modified to Phosphoserine. The stretch at 476–540 (DIEDEFYLRR…HIIKEYAENI (65 aa)) forms a coiled coil. At serine 545 the chain carries Phosphoserine.

In terms of assembly, component of the PRP19-CDC5L splicing complex composed of a core complex comprising a homotetramer of PRPF19, CDC5L, PLRG1 and BCAS2, and at least three less stably associated proteins CTNNBL1, CWC15 and HSPA8. Interacts directly with CWC15 and CDC5L in the complex. Interacts with AICDA; the interaction is important for the antibody diversification activity of AICDA. Interacts with PRPF31 (via its NLS). Interacts (via its N-terminal NLS) with KPNA1 and KPNA2.

Its subcellular location is the nucleus. In terms of biological role, component of the PRP19-CDC5L complex that forms an integral part of the spliceosome and is required for activating pre-mRNA splicing. Participates in AID/AICDA-mediated somatic hypermutation (SHM) and class-switch recombination (CSR), 2 processes resulting in the production of high-affinity, mutated isotype-switched antibodies. This Bos taurus (Bovine) protein is Beta-catenin-like protein 1 (CTNNBL1).